A 274-amino-acid chain; its full sequence is Lipid phosphate phosphatase 1 (274 aa).

The Lumenal portion of the chain corresponds to 1-15; that stretch reads MISVMADEKHKEYFK. The helical transmembrane segment at 16–33 threads the bilayer; the sequence is LYYFQYMIIGLCTILFLY. Residues 34 to 69 lie on the Cytoplasmic side of the membrane; that stretch reads SEISLVPRGQNIEFSLDDPSISKRYVPNELVGPLEC. The chain crosses the membrane as a helical span at residues 70–87; the sequence is LILSVGLSNMVVFWTCMF. At 88-117 the chain is on the lumenal side; sequence DKDLLKKNRVKRLRERPDGISNDFHFMHTS. A helical transmembrane segment spans residues 118–139; it reads ILCLMLIISINAALTGALKLII. Residues 136–144 are phosphatase sequence motif I; sequence KLIIGNLRP. Topologically, residues 140 to 189 are cytoplasmic; the sequence is GNLRPDFVDRCIPDLQKMSDSDSLVFGLDICKQTNKWILYEGLKSTPSGH. A phosphatase sequence motif II region spans residues 186–189; the sequence is PSGH. A helical membrane pass occupies residues 190–203; sequence SSFIVSTMGFTYLW. The Lumenal portion of the chain corresponds to 204 to 214; that stretch reads QRVFTTRNTRS. Residues 215–231 form a helical membrane-spanning segment; the sequence is CIWCPLLALVVMVSRVI. Positions 228–239 are phosphatase sequence motif III; sequence SRVIDHRHHWYD. Residues 232 to 237 lie on the Cytoplasmic side of the membrane; it reads DHRHHW. A helical transmembrane segment spans residues 238-255; the sequence is YDVVSGAVLAFLVIYCCW. Residues 256–274 lie on the Lumenal side of the membrane; the sequence is KWTFTNLAKRDILPSPVSV.

The protein belongs to the PA-phosphatase related phosphoesterase family.

The protein localises to the golgi apparatus membrane. The catalysed reaction is a 1,2-diacyl-sn-glycerol 3-diphosphate + H2O = a 1,2-diacyl-sn-glycero-3-phosphate + phosphate + H(+). The enzyme catalyses a 1,2-diacyl-sn-glycero-3-phosphate + H2O = a 1,2-diacyl-sn-glycerol + phosphate. It catalyses the reaction a 1-acyl-sn-glycero-3-phosphate + H2O = a 1-acyl-sn-glycerol + phosphate. Its activity is regulated as follows. PA phosphatase activity is magnesium ion-independent and potently inhibited by N-ethylmaleimide. Also inhibited by phenylglyoxal and propranolol. In terms of biological role, catalyzes the dephosphorylation of diacylglycerol diphosphate (DGPP) to phosphatidate (PA) and the subsequent dephosphorylation of PA to diacylglycerol (DAG). Together with DPP1, regulates intracellular DGPP and PA levels which are phospholipid molecules believed to play a signaling role in stress response. Can also use lysophosphatidic acid (LPA) as a substrate. Substrate preference is PA &gt; DGPP &gt; LPA. This Saccharomyces cerevisiae (strain ATCC 204508 / S288c) (Baker's yeast) protein is Lipid phosphate phosphatase 1 (LPP1).